The chain runs to 1118 residues: Phytochrome 1 (1118 aa).

The segment covering 1 to 10 has biased composition (low complexity); it reads MSSTRHSYSS. The segment at 1–23 is disordered; sequence MSSTRHSYSSGGSGKSKHGRRIA. In terms of domain architecture, GAF spans 212–391; it reads DIGLLCDSVV…VFSLQLNMEV (180 aa). C317 contributes to the phytochromobilin binding site. PAS domains are found at residues 606-677 and 740-811; these read VASE…LEGE and DYKA…TKLM. Residues 887 to 1110 form the Histidine kinase domain; that stretch reads YVKEELKKPL…LVTIQFPLAH (224 aa).

This sequence belongs to the phytochrome family. Homodimer. Post-translationally, contains one covalently linked phytochromobilin chromophore.

Functionally, regulatory photoreceptor which exists in two forms that are reversibly interconvertible by light: the Pr form that absorbs maximally in the red region of the spectrum and the Pfr form that absorbs maximally in the far-red region. Photoconversion of Pr to Pfr induces an array of morphogenic responses, whereas reconversion of Pfr to Pr cancels the induction of those responses. Pfr controls the expression of a number of nuclear genes including those encoding the small subunit of ribulose-bisphosphate carboxylase, chlorophyll A/B binding protein, protochlorophyllide reductase, rRNA, etc. It also controls the expression of its own gene(s) in a negative feedback fashion. The polypeptide is Phytochrome 1 (PHY1) (Adiantum capillus-veneris (Maidenhair fern)).